The sequence spans 395 residues: Torsin-3A (395 aa).

Residues 1-24 form the signal peptide; it reads MFFGAFWLLLLLLLPPLRPPGAQG. Residue N120 is glycosylated (N-linked (GlcNAc...) asparagine). Position 165-172 (165-172) interacts with ATP; sequence GWSGTGKN.

The protein belongs to the ClpA/ClpB family. Torsin subfamily. As to quaternary structure, may not form homohexamers. N-glycosylated.

Its subcellular location is the cytoplasm. The protein localises to the endoplasmic reticulum lumen. In Rattus norvegicus (Rat), this protein is Torsin-3A (Tor3a).